Consider the following 363-residue polypeptide: Peptide chain release factor 2 (363 aa).

At Gln-251 the chain carries N5-methylglutamine.

Belongs to the prokaryotic/mitochondrial release factor family. Methylated by PrmC. Methylation increases the termination efficiency of RF2.

It is found in the cytoplasm. In terms of biological role, peptide chain release factor 2 directs the termination of translation in response to the peptide chain termination codons UGA and UAA. The sequence is that of Peptide chain release factor 2 from Helicobacter pylori (strain HPAG1).